Consider the following 380-residue polypeptide: GPI-anchor transamidase (380 aa).

The first 19 residues, Met-1 to Ala-19, serve as a signal peptide directing secretion. At Glu-20–Pro-354 the chain is on the lumenal side. Active-site residues include His-145 and Cys-187. N-linked (GlcNAc...) asparagine glycosylation is present at Asn-307. Residues Ile-355–Ala-375 form a helical membrane-spanning segment. Over Ser-376–Lys-380 the chain is Cytoplasmic.

The protein belongs to the peptidase C13 family. In terms of assembly, forms a complex with PIG-T homolog, PIG-U homolog and PIG-S homolog. Post-translationally, the disulfide bond between PIGK/GPI8 and PIGT is important for normal enzyme activity.

The protein resides in the endoplasmic reticulum membrane. The protein operates within glycolipid biosynthesis; glycosylphosphatidylinositol-anchor biosynthesis. Functionally, mediates GPI anchoring in the endoplasmic reticulum, by replacing a protein's C-terminal GPI attachment signal peptide with a pre-assembled GPI. During this transamidation reaction, the GPI transamidase forms a carbonyl intermediate with the substrate protein. In Schizosaccharomyces pombe (strain 972 / ATCC 24843) (Fission yeast), this protein is GPI-anchor transamidase (gpi8).